Reading from the N-terminus, the 451-residue chain is UPF0210 protein NGO_1297 (451 aa).

The protein belongs to the UPF0210 family. Homodimer.

This chain is UPF0210 protein NGO_1297, found in Neisseria gonorrhoeae (strain ATCC 700825 / FA 1090).